The sequence spans 155 residues: FUN14 domain-containing protein 1 (155 aa).

Residues 1-47 are Cytoplasmic-facing; it reads MATRNPPPQDYESDDDSYEVLDLTEYARRHQWWNRVFGHSSGPMVEK. The residue at position 13 (Ser13) is a Phosphoserine; by CK2. Position 17 is a phosphoserine; by ULK1 (Ser17). Tyr18 bears the Phosphotyrosine; by SRC mark. The short motif at 18 to 21 is the YXXL element; it reads YEVL. Residues 48 to 68 traverse the membrane as a helical segment; that stretch reads YSVATQIVMGGVTGWCAGFLF. Topologically, residues 69-74 are mitochondrial intermembrane; it reads QKVGKL. Residues 75 to 95 form a helical membrane-spanning segment; sequence AATAVGGGFLLLQIASHSGYV. At 96–133 the chain is on the cytoplasmic side; sequence QIDWKRVEKDVNKAKRQIKKRANKAAPEINNLIEEATE. Lys119 participates in a covalent cross-link: Glycyl lysine isopeptide (Lys-Gly) (interchain with G-Cter in ubiquitin). A helical transmembrane segment spans residues 134-154; that stretch reads FIKQNIVISSGFVGGFLLGLA. Ser155 is a topological domain (mitochondrial intermembrane).

It belongs to the FUN14 family. Interacts (via YXXL motif) with MAP1 LC3 family proteins MAP1LC3A, MAP1LC3B and GABARAP. Interacts with DNM1L/DPR1. Interacts with GPX4. Post-translationally, phosphorylation at Ser-13 by CK2 and at Tyr-18 by SRC inhibits activation of mitophagy. Following hypoxia, dephosphorylated at Tyr-18, leading to interaction with MAP1 LC3 family proteins and triggering mitophagy. Dephosphorylation is mediated by PGAM5. Phosphorylated by ULK1 at Ser-17 which enhances FUNDC1 binding to LC3. In terms of processing, ubiquitinated on Lys-119. Deubiquitinated by USP19; leading to hypoxia-induced DRP1 oligomerization and GTPase activity. In terms of tissue distribution, widely expressed.

Its subcellular location is the mitochondrion outer membrane. Its function is as follows. Integral mitochondrial outer-membrane protein that mediates the formation of mitochondria-associated endoplasmic reticulum membranes (MAMs). In turn, mediates angiogenesis and neoangiogenesis through interference with intracellular Ca(2+) communication and regulation of the vascular endothelial growth factor receptor KDR/VEGFR2 expression at both mRNA and protein levels. Also acts as an activator of hypoxia-induced mitophagy, an important mechanism for mitochondrial quality and homeostasis, by interacting with and recruiting LC3 protein family to mitochondria. Mechanistically, recruits DRP1 at ER-mitochondria contact sites leading to DRP1 oligomerization and GTPase activity to facilitate mitochondrial fission during hypoxia. Additionally, plays a role in hepatic ferroptosis by interacting directly with glutathione peroxidase/GPX4 to facilitate its recruitment into mitochondria through TOM/TIM complex where it is degraded by mitophagy. The protein is FUN14 domain-containing protein 1 (FUNDC1) of Homo sapiens (Human).